Consider the following 634-residue polypeptide: Ankyrin repeat and SOCS box protein 2 (634 aa).

In terms of domain architecture, UIM spans 26–45 (SEEELLQMAIEQSLADKTRG). Positions 36 to 82 (EQSLADKTRGPTPAEASASSQTNHQPGHFHPWTRSPSSPENPPARAP) are disordered. ANK repeat units follow at residues 104–133 (AAMD…NLAE), 137–167 (EGWL…TIDQ), 171–200 (QEET…EPDI), 204–233 (SRET…DANH), 237–266 (RGWT…KVEA), 270–299 (YSIT…DINT), 303–332 (DSAS…DANK), 336–365 (DGLL…RTRV), 368–397 (SGIS…DVNA), 410–439 (RRSS…DPNR), 440–469 (DVIS…NIDA), and 476–504 (TAFP…DGEP). Residue Ser-371 is modified to Phosphoserine. The SOCS box domain occupies 580–634 (EDWAVIKEKAEPPRPLAHLCRLRVRKAIGKYRIKLLDTLPLPGRLIRYLKYENTQ).

Belongs to the ankyrin SOCS box (ASB) family. As to quaternary structure, component of a probable ECS E3 ubiquitin-protein ligase complex which contains CUL5, either RBX1 or RNF7/RBX2, Elongin BC complex (ELOB and ELOC) and ASB2. Interacts with SKP2. Through its interaction with SKP2, likely to bridge the formation of dimeric E3-ubiquitin-protein ligase complexes composed of an ECS complex and an SCF(SKP2) complex. Interacts with JAK2; the interaction targets JAK2 for Notch-mediated proteasomal degradation. Interacts with TCF3/E2A; the interaction is mediated by SKP2 and targets TCF3 for Notch-mediated proteasomal degradation. Interacts with DES. In terms of processing, monoubiquitinated. Post-translationally, not monoubiquitinated. Phosphorylation at Ser-371 is required for association with FLNA and subsequent FLNA degradation. As to expression, highest expression in muscle, heart and spleen. Highly expressed in cells of the first and second heart fields in the developing embryonic heart. At 9.5 dpc, robust expression predominantly in the left and right ventricles (RV) and to a lower extent in inflow and outflow tracts. At 10.5 and 11.5 dpc, expression is restricted to the myocardium with no expression observed in the endocardium. In terms of tissue distribution, not expressed in immature dendritic cells. Highly expressed in adult skeletal muscle with very low levels in adult bone marrow. Expressed in immature dendritic cells and in primary dendritic cells derived from the spleen. Highly expressed in adult bone marrow with negligible levels in adult skeletal muscle. Expressed at higher levels in T helper type 2 (Th2) cells than in regulatory T (Treg) cells, type 1 helper T (Th1) cells and T helper 17 (Th17) cells.

Its subcellular location is the cytoplasm. The protein resides in the cytoskeleton. The protein localises to the stress fiber. It localises to the myofibril. It is found in the sarcomere. Its subcellular location is the z line. It functions in the pathway protein modification; protein ubiquitination. Functionally, substrate-recognition component of a SCF-like ECS (Elongin-Cullin-SOCS-box protein) E3 ubiquitin-protein ligase complex which mediates the ubiquitination and subsequent proteasomal degradation of target proteins. Mediates Notch-induced ubiquitination and degradation of substrates including TCF3/E2A and JAK2. Required during embryonic heart development for complete heart looping. Required for cardiomyocyte differentiation. Specifically promotes the ubiquitination of SMAD9 and targets it for proteasomal degradation, leading to avoid excessive accumulation of SMAD9. Plays a role in the regulation of NK-cell migration by modulating protein levels of filamin A/FLNA via regulation of its ubiquitination and proteasome degradation. In terms of biological role, involved in myogenic differentiation and targets filamin FLNB for proteasomal degradation but not filamin FLNA. Also targets DES for proteasomal degradation. Acts as a negative regulator of skeletal muscle mass. Targets filamins FLNA and FLNB for proteasomal degradation. This leads to enhanced adhesion of hematopoietic cells to fibronectin. Required for FLNA degradation in immature cardiomyocytes which is necessary for actin cytoskeleton remodeling, leading to proper organization of myofibrils and function of mature cardiomyocytes. Required for degradation of FLNA and FLNB in immature dendritic cells (DC) which enhances immature DC migration by promoting DC podosome formation and DC-mediated degradation of the extracellular matrix. Does not promote proteasomal degradation of tyrosine-protein kinases JAK1 or JAK2 in hematopoietic cells. The protein is Ankyrin repeat and SOCS box protein 2 of Mus musculus (Mouse).